Reading from the N-terminus, the 477-residue chain is MSPQTETKASVGFKAGVKDYKLTYYTPDYETKDTDILAAFRVTPQPGVPPEEAGAAVAAESSTGTWTTVWTDGLTSLDRYKGRCYGIEPVPGEESQFIAYVAYPLDLFEEGSVTNMFTSIVGKVFGFKALRALRLEDLRIPIAYVKTFQGPRHGIQVERDKLNKYGRPLLGCTIKPKLGLSAKNYGRAVYECLRGGLDFTKDDENVNSQPFMRWRDRFLFCTEALFKAQTETGEIKGHYLNATAGTCEEMMKRAVFARELGVPIIMHDYLTGGFTANTTLAHYCRDNGLLLHIHRAMHAVIDRQKNHGMHFRVLAKALRMSGGDHIHSGTVVGKLEGEREITLGFVDLLRDDFIEKDRSRGIYFTQDWVSLPGVLPVASGGIHVWHMPALTEIFGDDSVLQFGGGTLGHPWGNAPGAVANRVALEACVQARNEGRDLAREGNEIIREAAKWSPELAAACEVWKAIKFEFNPVDTLDX.

Positions M1–S2 are excised as a propeptide. P3 is subject to N-acetylproline. An N6,N6,N6-trimethyllysine modification is found at K14. T173 contacts substrate. The active-site Proton acceptor is K175. K177 is a substrate binding site. The Mg(2+) site is built by K201, D203, and E204. N6-carboxylysine is present on K201. The active-site Proton acceptor is H294. Positions 295, 327, and 379 each coordinate substrate.

This sequence belongs to the RuBisCO large chain family. Type I subfamily. As to quaternary structure, heterohexadecamer of 8 large chains and 8 small chains; disulfide-linked. The disulfide link is formed within the large subunit homodimers. Mg(2+) is required as a cofactor. The disulfide bond which can form in the large chain dimeric partners within the hexadecamer appears to be associated with oxidative stress and protein turnover.

The protein resides in the plastid. The protein localises to the chloroplast. The catalysed reaction is 2 (2R)-3-phosphoglycerate + 2 H(+) = D-ribulose 1,5-bisphosphate + CO2 + H2O. It catalyses the reaction D-ribulose 1,5-bisphosphate + O2 = 2-phosphoglycolate + (2R)-3-phosphoglycerate + 2 H(+). In terms of biological role, ruBisCO catalyzes two reactions: the carboxylation of D-ribulose 1,5-bisphosphate, the primary event in carbon dioxide fixation, as well as the oxidative fragmentation of the pentose substrate in the photorespiration process. Both reactions occur simultaneously and in competition at the same active site. The chain is Ribulose bisphosphate carboxylase large chain from Gerbera jamesonii (Transvaal daisy).